Consider the following 71-residue polypeptide: Venom peptide 2-long (71 aa).

The signal sequence occupies residues 1-24; that stretch reads MKQSIIIALFATIAVMACLQMVAA. AXPX repeat units lie at residues 24–27, 32–35, 44–47, 50–53, and 54–57; these read AVPA, AAPG, ASPE, and AEPI. Residues 25–54 constitute a propeptide that is removed on maturation; it reads VPAPVPEAAPGPVAEAEAYASPEALASPEA. Leucine 68 carries the post-translational modification Leucine amide.

Belongs to the MCD family. Protonectin subfamily. As to expression, expressed by the venom gland.

Its subcellular location is the secreted. The protein localises to the target cell membrane. Functionally, antimicrobial peptide with strong activity against the fungus B.cinerea (MIC=0.5 ug/ml), and poor activities against the fungus C.albicans (MIC=100 ug/ml), the Gram-positive bacterium S.aureus (MIC=125 ug/ml) and the Gram-negative bacterium E.coli (MIC=125 ug/ml). Antimicrobial peptide with strong activity against the fungus B.cinerea (MIC=0.4 uM), and poor activities against the fungus C.albicans (MIC=16 uM), the Gram-positive bacterium S.aureus (MIC=20 uM) and the Gram-negative bacterium E.coli (MIC=79 uM). Shows cytolytic activity against insect cell lines. Has potent hemolytic activity against ovine erythrocytes. Has potent hemolytic activity against human erythrocytes (EC(50)=31 uM). In vivo, peptide injection in the vicinity of the head and thorax of lepidopteran larvae induces feeding disorder followed by death due to starvation. This Orancistrocerus drewseni (Solitary wasp) protein is Venom peptide 2-long.